The following is a 77-amino-acid chain: Large ribosomal subunit protein bL28 (77 aa).

The protein belongs to the bacterial ribosomal protein bL28 family.

The protein is Large ribosomal subunit protein bL28 of Leptothrix cholodnii (strain ATCC 51168 / LMG 8142 / SP-6) (Leptothrix discophora (strain SP-6)).